The following is a 750-amino-acid chain: Neprilysin (750 aa).

Residues 1 to 14 are compositionally biased toward polar residues; it reads MGKSESQMDITDIN. The tract at residues 1 to 20 is disordered; sequence MGKSESQMDITDINTPKPKK. The N-myristoyl glycine moiety is linked to residue Gly2. Residues 2-28 lie on the Cytoplasmic side of the membrane; that stretch reads GKSESQMDITDINTPKPKKKQRWTPLE. Ser4 and Ser6 each carry phosphoserine. Residues 16 to 23 carry the Stop-transfer sequence motif; sequence PKPKKKQR. A helical; Signal-anchor for type II membrane protein membrane pass occupies residues 29–51; sequence ISLSVLVLLLTIIAVTMIALYAT. Residues 52–750 are Extracellular-facing; sequence YDDGICKSSD…MNPEKKCRVW (699 aa). Positions 56–750 constitute a Peptidase M13 domain; that stretch reads ICKSSDCIKS…MNPEKKCRVW (695 aa). Cystine bridges form between Cys57-Cys62, Cys80-Cys735, Cys88-Cys695, Cys143-Cys411, Cys234-Cys242, and Cys621-Cys747. Arg103 serves as a coordination point for a peptide. N-linked (GlcNAc...) asparagine glycosylation occurs at Asn145. N-linked (GlcNAc...) asparagine glycans are attached at residues Asn285 and Asn325. His584 is a Zn(2+) binding site. Glu585 is an active-site residue. His588 serves as a coordination point for Zn(2+). N-linked (GlcNAc...) asparagine glycosylation is present at Asn628. Glu647 contacts Zn(2+). Asp651 functions as the Proton donor in the catalytic mechanism.

The protein belongs to the peptidase M13 family. It depends on Zn(2+) as a cofactor. Myristoylation is a determinant of membrane targeting. In terms of processing, glycosylation at Asn-628 is necessary both for surface expression and neutral endopeptidase activity.

It is found in the cell membrane. The enzyme catalyses Preferential cleavage of polypeptides between hydrophobic residues, particularly with Phe or Tyr at P1'.. It catalyses the reaction substance P + H2O = substance P(1-9) + L-Leu-L-Met-NH2. It carries out the reaction substance P + H2O = substance P(1-7) + L-Phe-Gly-L-Leu-L-Met-NH2. The catalysed reaction is neurotensin + H2O = neurotensin(1-11) + L-isoleucyl-L-leucine. The enzyme catalyses neurotensin + H2O = neurotensin(1-10) + L-tyrosyl-L-isoleucyl-L-leucine. Its activity is regulated as follows. Inhibited in a dose dependent manner by opiorphin. Activated by K49-P1-20, a twenty-residue synthetic peptide shortened from the snake B.asper myotoxin II. In terms of biological role, thermolysin-like specificity, but is almost confined on acting on polypeptides of up to 30 amino acids. Biologically important in the destruction of opioid peptides such as Met- and Leu-enkephalins by cleavage of a Gly-Phe bond. Catalyzes cleavage of bradykinin, substance P and neurotensin peptides. Able to cleave angiotensin-1, angiotensin-2 and angiotensin 1-9. Involved in the degradation of atrial natriuretic factor (ANF) and brain natriuretic factor (BNP(1-32)). Displays UV-inducible elastase activity toward skin preelastic and elastic fibers. The chain is Neprilysin from Homo sapiens (Human).